A 102-amino-acid polypeptide reads, in one-letter code: Small ribosomal subunit protein uS10 (102 aa).

The tract at residues 35–58 (SGPIPLPTKTLEIPSRKSPDGEGT) is disordered.

It belongs to the universal ribosomal protein uS10 family. As to quaternary structure, part of the 30S ribosomal subunit.

Its function is as follows. Involved in the binding of tRNA to the ribosomes. In Halorubrum lacusprofundi (strain ATCC 49239 / DSM 5036 / JCM 8891 / ACAM 34), this protein is Small ribosomal subunit protein uS10.